We begin with the raw amino-acid sequence, 151 residues long: Deoxyuridine 5'-triphosphate nucleotidohydrolase (151 aa).

Residues 70-72, asparagine 83, 87-89, and methionine 97 contribute to the substrate site; these read RSG and LID.

It belongs to the dUTPase family. Mg(2+) is required as a cofactor.

It carries out the reaction dUTP + H2O = dUMP + diphosphate + H(+). It functions in the pathway pyrimidine metabolism; dUMP biosynthesis; dUMP from dCTP (dUTP route): step 2/2. Its function is as follows. This enzyme is involved in nucleotide metabolism: it produces dUMP, the immediate precursor of thymidine nucleotides and it decreases the intracellular concentration of dUTP so that uracil cannot be incorporated into DNA. The sequence is that of Deoxyuridine 5'-triphosphate nucleotidohydrolase from Yersinia enterocolitica serotype O:8 / biotype 1B (strain NCTC 13174 / 8081).